A 105-amino-acid chain; its full sequence is Large ribosomal subunit protein eL36 (105 aa).

The interval 1-20 (MAKEAPAKTGLAVGLNKGHK) is disordered.

This sequence belongs to the eukaryotic ribosomal protein eL36 family.

The sequence is that of Large ribosomal subunit protein eL36 (rpl36) from Trichoderma hamatum.